A 403-amino-acid polypeptide reads, in one-letter code: Na(+)-translocating NADH-quinone reductase subunit B (403 aa).

Helical transmembrane passes span 56–76, 121–141, 164–184, and 195–212; these read MMIL…WNTG, AYFL…EVLF, LPPS…VVIG, and FLNP…AYPA. Residue T230 is modified to FMN phosphoryl threonine. 6 helical membrane passes run 237 to 257, 265 to 285, 287 to 307, 312 to 332, 348 to 368, and 371 to 391; these read AGGV…FLGI, TSTL…IAAW, IVAG…LIGS, MFAM…GTLF, WAFG…NPAF, and GMML…HFVV.

Belongs to the NqrB/RnfD family. In terms of assembly, composed of six subunits; NqrA, NqrB, NqrC, NqrD, NqrE and NqrF. It depends on FMN as a cofactor.

The protein resides in the cell inner membrane. The enzyme catalyses a ubiquinone + n Na(+)(in) + NADH + H(+) = a ubiquinol + n Na(+)(out) + NAD(+). Its function is as follows. NQR complex catalyzes the reduction of ubiquinone-1 to ubiquinol by two successive reactions, coupled with the transport of Na(+) ions from the cytoplasm to the periplasm. NqrA to NqrE are probably involved in the second step, the conversion of ubisemiquinone to ubiquinol. The sequence is that of Na(+)-translocating NADH-quinone reductase subunit B from Azotobacter vinelandii (strain DJ / ATCC BAA-1303).